The following is a 450-amino-acid chain: Phosphopentomutase (450 aa).

Serine 93 serves as the catalytic Phosphoserine intermediate. The Mg(2+) site is built by serine 93, aspartate 231, aspartate 233, and aspartate 235. Serine 93 bears the Phosphoserine; by autocatalysis mark.

The protein belongs to the phosphohexose mutase family. In terms of assembly, homotetramer. Mg(2+) is required as a cofactor. Post-translationally, activated by phosphorylation.

The enzyme catalyses alpha-D-ribose 1-phosphate = D-ribose 5-phosphate. The catalysed reaction is 2-deoxy-alpha-D-ribose 1-phosphate = 2-deoxy-D-ribose 5-phosphate. Functionally, catalyzes the conversion of deoxyribose 1-phosphate to deoxyribose 5-phosphate. Also shows weak activity with glucose 1-phosphate and mannose 1-phosphate. Could be involved in pentose biosynthesis. In Thermococcus kodakarensis (strain ATCC BAA-918 / JCM 12380 / KOD1) (Pyrococcus kodakaraensis (strain KOD1)), this protein is Phosphopentomutase.